We begin with the raw amino-acid sequence, 564 residues long: MSSHGNSLFLRESGQRLGRVGWLQRLQESLQQRALRTRLRLQTMTREHVLRFLRRNAFILLTVSAVVIGVSLAFALRPYQLTYRQIKYFSFPGELLMRMLQMLVLPLIVSSLVTGMASLDNKATGRMGMRAAVYYMVTTVIAVFIGILMVTIIHPGKGSKEGLHREGRIETIPTADAFMDLVRNMFPPNLVEACFKQFKTQYSTRLVTRTIVRTENGSELGTSMPPPSSMDNGTSLLENVTWALGTLQEVLSFEETVPVPGSANGINALGLVVFSVAFGLVIGGVKHKGRVLRDFFDSLNEAIMRMVGIIIWYAPVGILFLIAGKILEMEDMAVLGGQLGMYTLTVIVGLFLHAGGVLPLIYFLITHRNPFPFIGGVLQALITAMGTSSSSATLPITFRCLEEGLGVDRRITRFVLPVGATVNMDGTALYEALAAIFIAQVNNYELNLGQITTISITATAASVGAAGIPQAGLVTMVIVLTSVGLPTEDITLIIAVDWFLDRLRTMTNVLGDSIGAAVIEHLSQRELELQEAELTLPSLGKPYKPLMAQEKGASRGRGGNESAM.

Residues 1–55 lie on the Cytoplasmic side of the membrane; sequence MSSHGNSLFLRESGQRLGRVGWLQRLQESLQQRALRTRLRLQTMTREHVLRFLRR. Residue Ser2 is modified to Phosphoserine. Transmembrane regions (helical) follow at residues 56–76, 99–119, and 133–153; these read NAFI…AFAL, MLQM…MASL, and VYYM…VTII. N-linked (GlcNAc...) asparagine glycosylation is found at Asn216, Asn232, and Asn239. 3 consecutive transmembrane segments (helical) span residues 262-285, 295-322, and 344-365; these read SANG…IGGV, FFDS…LFLI, and LTVI…YFLI. Positions 371-401 form an intramembrane region, discontinuously helical; it reads FPFIGGVLQALITAMGTSSSSATLPITFRCL. L-aspartate is bound at residue 388–390; sequence SSS. A helical membrane pass occupies residues 411–437; sequence ITRFVLPVGATVNMDGTALYEALAAIF. Gly419, Thr421, and Asn423 together coordinate Na(+). L-aspartate contacts are provided by residues Thr427, 468 to 472, Asp501, and Asn508; that span reads IPQAG. An intramembrane region (discontinuously helical) is located at residues 451 to 484; the sequence is ITTISITATAASVGAAGIPQAGLVTMVIVLTSVG. Residues 498 to 519 traverse the membrane as a helical segment; sequence WFLDRLRTMTNVLGDSIGAAVI. Na(+)-binding residues include Asn508 and Asp512.

This sequence belongs to the dicarboxylate/amino acid:cation symporter (DAACS) (TC 2.A.23) family. SLC1A6 subfamily. As to quaternary structure, homotrimer. Detected in brain, cerebellum and hippocampus.

It is found in the cell membrane. It carries out the reaction K(+)(in) + L-glutamate(out) + 3 Na(+)(out) + H(+)(out) = K(+)(out) + L-glutamate(in) + 3 Na(+)(in) + H(+)(in). The catalysed reaction is K(+)(in) + L-aspartate(out) + 3 Na(+)(out) + H(+)(out) = K(+)(out) + L-aspartate(in) + 3 Na(+)(in) + H(+)(in). It catalyses the reaction D-aspartate(out) + K(+)(in) + 3 Na(+)(out) + H(+)(out) = D-aspartate(in) + K(+)(out) + 3 Na(+)(in) + H(+)(in). Its function is as follows. Sodium-dependent, high-affinity amino acid transporter that mediates the uptake of L-glutamate and also L-aspartate and D-aspartate. Functions as a symporter that transports one amino acid molecule together with two or three Na(+) ions and one proton, in parallel with the counter-transport of one K(+) ion. Mediates Cl(-) flux that is not coupled to amino acid transport; this avoids the accumulation of negative charges due to aspartate and Na(+) symport. Plays a redundant role in the rapid removal of released glutamate from the synaptic cleft, which is essential for terminating the postsynaptic action of glutamate. The polypeptide is Excitatory amino acid transporter 4 (SLC1A6) (Canis lupus familiaris (Dog)).